Consider the following 513-residue polypeptide: Zinc finger CCCH-type with G patch domain-containing protein (513 aa).

The C3H1-type zinc-finger motif lies at 155–178 (PCSYYLEGECRFDETKCRFSHGAL). 2 stretches are compositionally biased toward acidic residues: residues 252–261 (DQDEDDELSS) and 271–283 (DSSD…MDDL). Positions 252-283 (DQDEDDELSSEESNSSMNDDSSDEAESDMDDL) are disordered. The G-patch domain maps to 312–358 (TRGIGSKLMEKMGYIHGTGLGSDGRGIVTPVSAQILPQGRSLDACME). Residues 455–467 (DMAKVKQSLDRNS) show a composition bias toward basic and acidic residues. The segment at 455-513 (DMAKVKQSLDRNSGDAQLQKRLQVQMESHKQELATLQAQERSLSKEQQTRKSKNKMFEF) is disordered. A compositionally biased stretch (polar residues) spans 468–480 (GDAQLQKRLQVQM). A compositionally biased stretch (basic and acidic residues) spans 496–513 (SLSKEQQTRKSKNKMFEF).

The protein resides in the nucleus. Its function is as follows. Transcription repressor. The sequence is that of Zinc finger CCCH-type with G patch domain-containing protein from Drosophila yakuba (Fruit fly).